A 275-amino-acid polypeptide reads, in one-letter code: Putative carbamate hydrolase RutD (275 aa).

Belongs to the AB hydrolase superfamily. Hydrolase RutD family.

The catalysed reaction is carbamate + 2 H(+) = NH4(+) + CO2. Functionally, involved in pyrimidine catabolism. May facilitate the hydrolysis of carbamate, a reaction that can also occur spontaneously. The polypeptide is Putative carbamate hydrolase RutD (Escherichia coli O6:H1 (strain CFT073 / ATCC 700928 / UPEC)).